The primary structure comprises 280 residues: Probable endonuclease lcl3 (280 aa).

Residues 50 to 67 form a helical membrane-spanning segment; the sequence is TLIPTLILTTAILSAARF. The TNase-like domain maps to 89-257; it reads RSIYGKVTSV…KLKGNGMWKG (169 aa). The active site involves arginine 140. Position 145 (aspartate 145) interacts with Ca(2+). Residues glutamate 148 and arginine 188 contribute to the active site.

This sequence belongs to the LCL3 family.

The protein localises to the mitochondrion. It localises to the membrane. This is Probable endonuclease lcl3 (lcl3) from Emericella nidulans (strain FGSC A4 / ATCC 38163 / CBS 112.46 / NRRL 194 / M139) (Aspergillus nidulans).